The following is a 465-amino-acid chain: MTIHIYNTLTRQKEEFTPLEENKVKMYVCGPTVYNYIHIGNARPPMVFDTVRRYLEYKGYDVQYVSNFTDVDDKLIKAANELGEDVPTIADRFVEAYFEDVTALGCKHATVHPRVTENMDIIIEFIQELVNKGYAYESEGDVYFRTKEFEGYGKLSHQPIADLRHGARIEVGEKKQDPLDFALWKAAKEGEIFWESPWGQGRPGWHIECSAMARKYLGDTIDIHAGGQDLAFPHHENEIAQSEALTGKTFARYWMHNGYININNEKMSKSLGNFILVHDIIKQYDPQLIRFFMLSVHYRHPINFSEELLQSTNNGLERIKTAYGNLKHRMESSTDLTDHNEKWLADLEKFQTAFEEAMNDDFNTANAITELYNVANHANQYLLEEHTSTVVIEAYVKQLETLFDILGLELAQEELLDEEIEALIQKRIEARKNRDFALSDQIRDDLKDRNIILEDTAQGTRWKRG.

C29 is a Zn(2+) binding site. The 'HIGH' region signature appears at 31-41 (PTVYNYIHIGN). 3 residues coordinate Zn(2+): C209, H234, and E238. Positions 266–270 (KMSKS) match the 'KMSKS' region motif. K269 contributes to the ATP binding site. Phosphoserine is present on S270.

Belongs to the class-I aminoacyl-tRNA synthetase family. In terms of assembly, monomer. Zn(2+) is required as a cofactor.

The protein resides in the cytoplasm. It catalyses the reaction tRNA(Cys) + L-cysteine + ATP = L-cysteinyl-tRNA(Cys) + AMP + diphosphate. The protein is Cysteine--tRNA ligase of Bacillus anthracis (strain A0248).